We begin with the raw amino-acid sequence, 639 residues long: UvrABC system protein C (639 aa).

Positions 1–16 (MTDLPVDEPDRDDGAD) are enriched in acidic residues. The disordered stretch occupies residues 1–28 (MTDLPVDEPDRDDGADQPDAGADPATPR). A compositionally biased stretch (low complexity) spans 17–27 (QPDAGADPATP). Residues 42–120 (SSPGVYRMID…IKKLKPRYNI (79 aa)) form the GIY-YIG domain. Residues 230–265 (KALQHDLAKRMDEAAQALDYEQAAIFRDRIKALTNV) form the UVR domain.

Belongs to the UvrC family. Interacts with UvrB in an incision complex.

The protein resides in the cytoplasm. Its function is as follows. The UvrABC repair system catalyzes the recognition and processing of DNA lesions. UvrC both incises the 5' and 3' sides of the lesion. The N-terminal half is responsible for the 3' incision and the C-terminal half is responsible for the 5' incision. The protein is UvrABC system protein C of Rhodospirillum rubrum (strain ATCC 11170 / ATH 1.1.1 / DSM 467 / LMG 4362 / NCIMB 8255 / S1).